Reading from the N-terminus, the 130-residue chain is Protein NrdI (130 aa).

Belongs to the NrdI family.

In terms of biological role, probably involved in ribonucleotide reductase function. In Bacillus velezensis (strain DSM 23117 / BGSC 10A6 / LMG 26770 / FZB42) (Bacillus amyloliquefaciens subsp. plantarum), this protein is Protein NrdI.